We begin with the raw amino-acid sequence, 330 residues long: Flotillin-like protein FloA (330 aa).

The next 2 helical transmembrane spans lie at 3–23 (IISV…TLYM) and 26–46 (LRLW…TLIA).

It belongs to the flotillin-like FloA family. As to quaternary structure, homooligomerizes.

It localises to the cell membrane. Its subcellular location is the membrane raft. Functionally, found in functional membrane microdomains (FMM) that may be equivalent to eukaryotic membrane rafts. FMMs are highly dynamic and increase in number as cells age. Flotillins are thought to be important factors in membrane fluidity. This chain is Flotillin-like protein FloA, found in Sorangium cellulosum (strain So ce56) (Polyangium cellulosum (strain So ce56)).